Reading from the N-terminus, the 157-residue chain is Endoribonuclease YbeY (157 aa).

Zn(2+)-binding residues include His114, His118, and His124.

It belongs to the endoribonuclease YbeY family. Zn(2+) serves as cofactor.

It localises to the cytoplasm. Single strand-specific metallo-endoribonuclease involved in late-stage 70S ribosome quality control and in maturation of the 3' terminus of the 16S rRNA. The polypeptide is Endoribonuclease YbeY (Yersinia pseudotuberculosis serotype O:1b (strain IP 31758)).